The following is a 64-amino-acid chain: Antimicrobial peptide 1 (64 aa).

Residues 1-26 form the signal peptide; that stretch reads MAKVSSSLLKFAIVLILVLSMSAIIS. 3 disulfides stabilise this stretch: Cys29/Cys46, Cys36/Cys50, and Cys45/Cys61.

This sequence belongs to the AMP family.

Its subcellular location is the secreted. Its function is as follows. Possesses antifungal and antibacterial activity. The sequence is that of Antimicrobial peptide 1 from Mesembryanthemum crystallinum (Common ice plant).